Here is a 1187-residue protein sequence, read N- to C-terminus: Protein WWC2 (1187 aa).

2 consecutive WW domains span residues 10–43 (LPLPRGWEEARDYDGKVFYIDHNTRRTSWIDPRD) and 57–90 (DELPWGWEAGFDPQIGAYYIDHINKTTQIEDPRK). Coiled coils occupy residues 121–194 (KEQR…YKQQ) and 224–256 (ELKSIRKAISSGEKEKQDLMQSLAKLQERFHLD). At Ser286 the chain carries Phosphoserine. The stretch at 302–423 (LAEKVRLSLQ…EETTKLTTSL (122 aa)) forms a coiled coil. The segment at 438–464 (SSGSSLGSLASSRGSLNTSSRGSLNSL) is disordered. A C2 domain is found at 697-820 (ETAQVQIGLR…FSNEIFMLWY (124 aa)). 2 disordered regions span residues 830–849 (CKKNEDGNEEPGARSQQPML) and 874–963 (ELAQ…ETNT). Positions 859 to 885 (ALLARTSAELLAVEQELAQEEEEEELR) form a coiled coil. A compositionally biased stretch (acidic residues) spans 875 to 884 (LAQEEEEEEL). The residue at position 999 (Thr999) is a Phosphothreonine. Position 1017 is a phosphoserine (Ser1017). Positions 1026–1045 (SLFVRNSTERRSLRVKRAVC) are interaction with PRKCZ. The stretch at 1063–1143 (DLELDLQASL…DLNAERLMRQ (81 aa)) forms a coiled coil.

This sequence belongs to the WWC family. In terms of assembly, forms homodimers and heterodimers with WWC1 and WWC3. Interacts with DLC1 and PRKCZ. Interacts (via WW domains) with LATS1 and LATS2.

It localises to the cytoplasm. Its subcellular location is the cytosol. In terms of biological role, regulator of the Hippo signaling pathway, also known as the Salvador-Warts-Hippo (SWH) pathway. Enhances phosphorylation of LATS1 and YAP1 and negatively regulates cell proliferation and organ growth due to a suppression of the transcriptional activity of YAP1, the major effector of the Hippo pathway. The sequence is that of Protein WWC2 (Wwc2) from Mus musculus (Mouse).